A 196-amino-acid chain; its full sequence is Holliday junction branch migration complex subunit RuvA (196 aa).

Residues 1 to 63 (MIASVRGEVI…EDSMTLYGFA (63 aa)) form a domain I region. Residues 64–142 (DADARDLFGT…PVTTGAGVTA (79 aa)) are domain II. Residues 143-151 (VGGHAVRGP) form a flexible linker region. The tract at residues 151–196 (PVVEALVGLGFAAKQAEEACDKVLAADPDATTSSALRAALSMLGKK) is domain III.

The protein belongs to the RuvA family. As to quaternary structure, homotetramer. Forms an RuvA(8)-RuvB(12)-Holliday junction (HJ) complex. HJ DNA is sandwiched between 2 RuvA tetramers; dsDNA enters through RuvA and exits via RuvB. An RuvB hexamer assembles on each DNA strand where it exits the tetramer. Each RuvB hexamer is contacted by two RuvA subunits (via domain III) on 2 adjacent RuvB subunits; this complex drives branch migration. In the full resolvosome a probable DNA-RuvA(4)-RuvB(12)-RuvC(2) complex forms which resolves the HJ.

It is found in the cytoplasm. Its function is as follows. The RuvA-RuvB-RuvC complex processes Holliday junction (HJ) DNA during genetic recombination and DNA repair, while the RuvA-RuvB complex plays an important role in the rescue of blocked DNA replication forks via replication fork reversal (RFR). RuvA specifically binds to HJ cruciform DNA, conferring on it an open structure. The RuvB hexamer acts as an ATP-dependent pump, pulling dsDNA into and through the RuvAB complex. HJ branch migration allows RuvC to scan DNA until it finds its consensus sequence, where it cleaves and resolves the cruciform DNA. The polypeptide is Holliday junction branch migration complex subunit RuvA (Mycobacterium sp. (strain JLS)).